The following is a 189-amino-acid chain: MTKLLVGLGNPGDKYFETKHNVGFMLIDQLAKKQNVTFTHDKIFQADLASFFLNGEKIYLVKPTTFMNESGKAVHALLTYYGLDIDDLLIIYDDLDMEVGKIRLRAKGSAGGHNGIKSIIQHIGTQVFNRVKIGIGRPKNGMSVVHHVLSKFDRDDYIGILQSVDKVDDSVNYYLQEKNFEKTMQRYNG.

Y15 is a tRNA binding site. H20 acts as the Proton acceptor in catalysis. The tRNA site is built by F66, N68, and N114.

It belongs to the PTH family. Monomer.

Its subcellular location is the cytoplasm. It catalyses the reaction an N-acyl-L-alpha-aminoacyl-tRNA + H2O = an N-acyl-L-amino acid + a tRNA + H(+). Functionally, hydrolyzes ribosome-free peptidyl-tRNAs (with 1 or more amino acids incorporated), which drop off the ribosome during protein synthesis, or as a result of ribosome stalling. Catalyzes the release of premature peptidyl moieties from peptidyl-tRNA molecules trapped in stalled 50S ribosomal subunits, and thus maintains levels of free tRNAs and 50S ribosomes. In Streptococcus pneumoniae (strain P1031), this protein is Peptidyl-tRNA hydrolase.